The sequence spans 334 residues: Glyceraldehyde-3-phosphate dehydrogenase (334 aa).

Residues 12–13 and G111 contribute to the NAD(+) site; that span reads TI. 140–142 is a binding site for D-glyceraldehyde 3-phosphate; the sequence is SCN. Residue C141 is the Nucleophile of the active site. R167 lines the NAD(+) pocket. 192–193 serves as a coordination point for D-glyceraldehyde 3-phosphate; sequence HG. Q298 lines the NAD(+) pocket.

It belongs to the glyceraldehyde-3-phosphate dehydrogenase family. As to quaternary structure, homotetramer.

It localises to the cytoplasm. The catalysed reaction is D-glyceraldehyde 3-phosphate + phosphate + NADP(+) = (2R)-3-phospho-glyceroyl phosphate + NADPH + H(+). It carries out the reaction D-glyceraldehyde 3-phosphate + phosphate + NAD(+) = (2R)-3-phospho-glyceroyl phosphate + NADH + H(+). It participates in carbohydrate degradation; glycolysis; pyruvate from D-glyceraldehyde 3-phosphate: step 1/5. This is Glyceraldehyde-3-phosphate dehydrogenase from Thermococcus onnurineus (strain NA1).